The chain runs to 552 residues: Cation/acetate symporter ActP (552 aa).

14 helical membrane passes run 5–25, 35–55, 78–98, 105–125, 151–171, 185–205, 208–228, 264–284, 305–325, 357–377, 407–427, 431–451, 466–486, and 499–519; these read FMML…DALT, IQAI…TYWA, GLAI…SALV, GLIY…LIAE, LSAC…MVGA, VAVI…GMLA, WVQI…AVMV, ISAL…PHIL, GFMG…ILLV, FFLG…VAGL, VSKI…ILFE, IAFM…PIII, IGGW…PTIW, and YDYP…FFSI.

Belongs to the sodium:solute symporter (SSF) (TC 2.A.21) family.

The protein localises to the cell inner membrane. Its function is as follows. Transports acetate. This Pectobacterium carotovorum subsp. carotovorum (strain PC1) protein is Cation/acetate symporter ActP.